A 1778-amino-acid chain; its full sequence is Protein TIC 214 (1778 aa).

The next 6 membrane-spanning stretches (helical) occupy residues 18 to 38, 67 to 87, 90 to 110, 132 to 152, 175 to 195, and 226 to 246; these read IINSVVVVGLYYGFLTTFSIG, FIAGQLMMFISIYYAPLHLAL, PHTITVLALPYLLFHFFWNNN, VFLNNLIFQLFNHFILPSSML, VGWLIGHILFMKWVGLVLVWI, and IFSILLFITCVYYLGRIPSPI. The interval 1498–1520 is disordered; sequence GQGELESDNEKKRNPESALSNQE.

The protein belongs to the TIC214 family. As to quaternary structure, part of the Tic complex.

It localises to the plastid. The protein localises to the chloroplast inner membrane. Its function is as follows. Involved in protein precursor import into chloroplasts. May be part of an intermediate translocation complex acting as a protein-conducting channel at the inner envelope. This chain is Protein TIC 214, found in Arabis hirsuta (Hairy rock-cress).